The following is a 439-amino-acid chain: GSGKSFTMMHKDNGIYVLACFDILEYLRVYNGSQGNNSKFLVPVVSFFEIYGGKLFDLLNNRQRLQALEDGKGNVQITGLTEKQISSVDAMLNLIDSGLTLRAVGATGANADSSRSHAILQIALKYTKSGKEYSRISFIDLAGSERASDVQNSDRQTRMEGAEINKSLLALKECIRAMDKSNDSKSGAHIPFRGSKLTMVLRDSFIGNSQTVMIANISPNDKSCDNTLNTLRYADRVKELQHGKGGIIKFNVLKMGQNAADVILGTARDDENDVYKAGIVGVNAAPSQQARVPPASQAPITARQIQQNLPQPHYNPNYNPPNSKPAFEPRVETTDEDDMVRTHCDLVDSIYEQEDLIVRAHRRQVDSMMQLVKEEVALLHAIENDQVSIDDWLVKLSDILSRKEEAITTLKGNLSAFKQALQKEEELSHSIDLNKARKK.

1-5 is an ATP binding site; that stretch reads GSGKS. The Kinesin motor domain occupies 1–240; sequence GSGKSFTMMH…LRYADRVKEL (240 aa).

Belongs to the TRAFAC class myosin-kinesin ATPase superfamily. Kinesin family. KIN-13 subfamily. Interacts with PLK. Post-translationally, phosphorylated by PLK.

The protein resides in the cytoplasm. Its subcellular location is the cytoskeleton. It is found in the cell projection. The protein localises to the cilium. It localises to the flagellum. The protein resides in the flagellum basal body. Its subcellular location is the flagellum axoneme. It is found in the spindle. The protein localises to the chromosome. It localises to the centromere. The protein resides in the kinetochore. Involved in cell cycle. Involved in formation of flagella, regulation of flagellar length, and formation of median bodies during interphase. Regulates flagellar length in all eight distal flagellar tips by promoting disassembly of the microtubules. Disassembles microtubules at the distal flagellar tips in a length-dependent manner in order to maintain different equilibrium lengths of the four flagellar pairs. Regulates interphase and mitotic microtubule dynamics. Regulates microtubule disassembly dynamics of the dual mitotic spindles and the median body. The sequence is that of Kinesin-like protein KIN-13 from Giardia intestinalis (Giardia lamblia).